Here is a 292-residue protein sequence, read N- to C-terminus: High-affinity heme uptake system protein IsdE (292 aa).

An N-terminal signal peptide occupies residues 1 to 19; it reads MRIIKYLTILVISVVILTS. The N-palmitoyl cysteine moiety is linked to residue C20. Residue C20 is the site of S-diacylglycerol cysteine attachment. The 257-residue stretch at 35-291 folds into the Fe/B12 periplasmic-binding domain; sequence RIVPTTVALT…QLYDLFYKDK (257 aa). 6 residues coordinate heme: V41, A42, S60, Y61, M78, and H229.

The protein belongs to the bacterial solute-binding protein 8 family. It depends on heme b as a cofactor.

The protein localises to the cell membrane. Involved in heme (porphyrin) scavenging. Binds Fe(2+) and Fe(3+) heme but the largest fraction is Fe(2+) heme. Functions as a high-affinity heme binding protein and probably has a role in relaying heme-iron from cell wall-anchored isd proteins receptors to the probable permease IsdF. The polypeptide is High-affinity heme uptake system protein IsdE (isdE) (Staphylococcus aureus (strain MRSA252)).